Here is a 305-residue protein sequence, read N- to C-terminus: Autophagy-related protein 27 (305 aa).

Residues 1–22 (MARYKGLSILSLFAVFSSLASA) form the signal peptide. Topologically, residues 23–242 (ELDCSNIKVD…EDGGSAPSGH (220 aa)) are lumenal. The MRH domain occupies 24-231 (LDCSNIKVDG…EWKTKYACEN (208 aa)). Cystine bridges form between C26/C66 and C74/C81. N58 carries N-linked (GlcNAc...) asparagine glycosylation. N-linked (GlcNAc...) asparagine glycosylation is present at N85. A disulfide bond links C156 and C229. The interval 163-202 (LEGLESPKPDGDKKKDGEKKDDDKKDNKDKEGKSKRDGEE) is disordered. The helical transmembrane segment at 243–263 (WGFFTWVIVLYVVLVSLPLLS) threads the bilayer. Over 264 to 305 (ERVTNVRCHSQPVPVHFGLSDIRLVAQLQPVWSSRVGLASSQ) the chain is Cytoplasmic.

It belongs to the ATG27 family.

It localises to the cytoplasmic vesicle membrane. The protein resides in the golgi apparatus membrane. Its subcellular location is the mitochondrion membrane. It is found in the preautophagosomal structure membrane. In terms of biological role, effector of phosphatidylinositol 3-phosphate kinase signaling. Regulates the cytoplasm to vacuole transport (Cvt) vesicle formation. Plays a role in ATG protein retrieval from the pre-autophagosomal structure (PAS). In Arthroderma benhamiae (strain ATCC MYA-4681 / CBS 112371) (Trichophyton mentagrophytes), this protein is Autophagy-related protein 27.